Here is a 152-residue protein sequence, read N- to C-terminus: Histone H2B.1 (152 aa).

Over residues M1 to P28 the composition is skewed to basic and acidic residues. The interval M1–K60 is disordered. N6-acetyllysine is present on residues K7 and K37. Residue K148 forms a Glycyl lysine isopeptide (Lys-Gly) (interchain with G-Cter in ubiquitin) linkage.

This sequence belongs to the histone H2B family. In terms of assembly, the nucleosome is a histone octamer containing two molecules each of H2A, H2B, H3 and H4 assembled in one H3-H4 heterotetramer and two H2A-H2B heterodimers. The octamer wraps approximately 147 bp of DNA. In terms of processing, can be acetylated to form H2BK6ac and H2BK33ac. Monoubiquitinated to form H2BK143ub1; may give a specific tag for epigenetic transcriptional activation.

Its subcellular location is the nucleus. The protein resides in the chromosome. Core component of nucleosome. Nucleosomes wrap and compact DNA into chromatin, limiting DNA accessibility to the cellular machineries which require DNA as a template. Histones thereby play a central role in transcription regulation, DNA repair, DNA replication and chromosomal stability. DNA accessibility is regulated via a complex set of post-translational modifications of histones, also called histone code, and nucleosome remodeling. This chain is Histone H2B.1, found in Triticum aestivum (Wheat).